The chain runs to 433 residues: Enolase (433 aa).

Q164 lines the (2R)-2-phosphoglycerate pocket. The active-site Proton donor is the E206. Mg(2+) contacts are provided by D243, E289, and D316. (2R)-2-phosphoglycerate contacts are provided by K341, R370, S371, and K392. K341 (proton acceptor) is an active-site residue.

It belongs to the enolase family. The cofactor is Mg(2+).

It localises to the cytoplasm. The protein resides in the secreted. It is found in the cell surface. The enzyme catalyses (2R)-2-phosphoglycerate = phosphoenolpyruvate + H2O. It participates in carbohydrate degradation; glycolysis; pyruvate from D-glyceraldehyde 3-phosphate: step 4/5. Catalyzes the reversible conversion of 2-phosphoglycerate (2-PG) into phosphoenolpyruvate (PEP). It is essential for the degradation of carbohydrates via glycolysis. In Borreliella burgdorferi (strain ZS7) (Borrelia burgdorferi), this protein is Enolase.